A 264-amino-acid chain; its full sequence is S-adenosylmethionine decarboxylase proenzyme (264 aa).

The active-site Schiff-base intermediate with substrate; via pyruvic acid is the Ser112. Ser112 bears the Pyruvic acid (Ser); by autocatalysis mark. Residue His117 is the Proton acceptor; for processing activity of the active site. Cys140 acts as the Proton donor; for catalytic activity in catalysis.

Belongs to the prokaryotic AdoMetDC family. Type 2 subfamily. In terms of assembly, heterooctamer of four alpha and four beta chains arranged as a tetramer of alpha/beta heterodimers. Requires pyruvate as cofactor. In terms of processing, is synthesized initially as an inactive proenzyme. Formation of the active enzyme involves a self-maturation process in which the active site pyruvoyl group is generated from an internal serine residue via an autocatalytic post-translational modification. Two non-identical subunits are generated from the proenzyme in this reaction, and the pyruvate is formed at the N-terminus of the alpha chain, which is derived from the carboxyl end of the proenzyme. The post-translation cleavage follows an unusual pathway, termed non-hydrolytic serinolysis, in which the side chain hydroxyl group of the serine supplies its oxygen atom to form the C-terminus of the beta chain, while the remainder of the serine residue undergoes an oxidative deamination to produce ammonia and the pyruvoyl group blocking the N-terminus of the alpha chain.

It catalyses the reaction S-adenosyl-L-methionine + H(+) = S-adenosyl 3-(methylsulfanyl)propylamine + CO2. Its pathway is amine and polyamine biosynthesis; S-adenosylmethioninamine biosynthesis; S-adenosylmethioninamine from S-adenosyl-L-methionine: step 1/1. Functionally, catalyzes the decarboxylation of S-adenosylmethionine to S-adenosylmethioninamine (dcAdoMet), the propylamine donor required for the synthesis of the polyamines spermine and spermidine from the diamine putrescine. The polypeptide is S-adenosylmethionine decarboxylase proenzyme (Salmonella agona (strain SL483)).